A 582-amino-acid chain; its full sequence is Heterogeneous nuclear ribonucleoprotein C homolog (582 aa).

Positions 1-21 are disordered; the sequence is MSEALETGDPSPPPPIVSENG. 3 C2H2-type zinc fingers span residues 102 to 125, 130 to 154, and 213 to 235; these read YYCC…RGYH, SSCD…RRTH, and YACL…VEMH.

It localises to the nucleus. The sequence is that of Heterogeneous nuclear ribonucleoprotein C homolog from Caenorhabditis elegans.